A 332-amino-acid polypeptide reads, in one-letter code: MRAALAAAAALPVPDAEGDHGPARPHPLAPGALVLIGLSGGADSLALAAAAAFEAPRAGFRSGAIVVDHGLQPGSAEVAAGAACQARALGLGPVLVERVRVEAAGGPEGAARAARHTAFDSAARATAAARILLAHTLDDQAETVLLGLARGSGPSSLQGMLPDTGRLLRPFLGLRRATTRAFCADSGLEPWDDPHNDDPAYTRVRVRSAVLPVLEQELGPGVAEALARTAEQLREDDQALDSLALEGAQELVSQADDGSVALEVRGLAAGPPALRQRIIRLVVSAEFGVSLSRSHTLAVAALIADWHGQGPLSLPGVRVVRQNGLLTFHPHT.

39–44 contacts ATP; the sequence is SGGADS.

Belongs to the tRNA(Ile)-lysidine synthase family.

It localises to the cytoplasm. It carries out the reaction cytidine(34) in tRNA(Ile2) + L-lysine + ATP = lysidine(34) in tRNA(Ile2) + AMP + diphosphate + H(+). Functionally, ligates lysine onto the cytidine present at position 34 of the AUA codon-specific tRNA(Ile) that contains the anticodon CAU, in an ATP-dependent manner. Cytidine is converted to lysidine, thus changing the amino acid specificity of the tRNA from methionine to isoleucine. This Leifsonia xyli subsp. xyli (strain CTCB07) protein is tRNA(Ile)-lysidine synthase.